An 83-amino-acid polypeptide reads, in one-letter code: Late seed maturation protein P8B6 (83 aa).

Composition is skewed to basic and acidic residues over residues 1 to 18 (MASQ…KKGE) and 37 to 51 (AEGR…KEQL). Positions 1 to 83 (MASQQEKKQL…DAEDEPSTRT (83 aa)) are disordered. Residues 73–83 (EDAEDEPSTRT) show a composition bias toward acidic residues.

This sequence belongs to the small hydrophilic plant seed protein family.

The protein localises to the cytoplasm. In terms of biological role, this protein may play a role in equipping the seed for survival, maintaining a minimal level of hydration in the dry organism and preventing the denaturation of cytoplasmic components, or may play a role during imbibition by controlling water uptake. This is Late seed maturation protein P8B6 from Raphanus sativus (Radish).